A 238-amino-acid chain; its full sequence is Probable transcriptional regulatory protein YcdB (238 aa).

It belongs to the TACO1 family. YeeN subfamily.

It is found in the cytoplasm. The sequence is that of Probable transcriptional regulatory protein YcdB (ycdB) from Lactococcus lactis subsp. lactis (strain IL1403) (Streptococcus lactis).